We begin with the raw amino-acid sequence, 89 residues long: Large ribosomal subunit protein eL34 (89 aa).

It belongs to the eukaryotic ribosomal protein eL34 family.

The chain is Large ribosomal subunit protein eL34 (rpl34e) from Methanocaldococcus jannaschii (strain ATCC 43067 / DSM 2661 / JAL-1 / JCM 10045 / NBRC 100440) (Methanococcus jannaschii).